A 115-amino-acid chain; its full sequence is U3-lycotoxin-Ls1i (115 aa).

A signal peptide spans 1-20; sequence MKFVLLFGVFLVTLFSYSSA. Residues 21-44 constitute a propeptide that is removed on maturation; it reads EMLDDFDQADEDELLSLIEKEEAR. Disulfide bonds link Cys-48–Cys-63, Cys-55–Cys-72, Cys-62–Cys-87, and Cys-74–Cys-85.

This sequence belongs to the neurotoxin 19 (CSTX) family. 01 subfamily. Expressed by the venom gland.

It localises to the secreted. This is U3-lycotoxin-Ls1i from Lycosa singoriensis (Wolf spider).